Consider the following 59-residue polypeptide: Large ribosomal subunit protein uL30 (59 aa).

The protein belongs to the universal ribosomal protein uL30 family. As to quaternary structure, part of the 50S ribosomal subunit.

This Rhodococcus jostii (strain RHA1) protein is Large ribosomal subunit protein uL30.